The sequence spans 492 residues: 2-succinylbenzoate--CoA ligase (492 aa).

This sequence belongs to the ATP-dependent AMP-binding enzyme family. MenE subfamily.

The enzyme catalyses 2-succinylbenzoate + ATP + CoA = 2-succinylbenzoyl-CoA + AMP + diphosphate. It participates in quinol/quinone metabolism; 1,4-dihydroxy-2-naphthoate biosynthesis; 1,4-dihydroxy-2-naphthoate from chorismate: step 5/7. Its pathway is quinol/quinone metabolism; menaquinone biosynthesis. In terms of biological role, converts 2-succinylbenzoate (OSB) to 2-succinylbenzoyl-CoA (OSB-CoA). This is 2-succinylbenzoate--CoA ligase from Staphylococcus aureus (strain MRSA252).